We begin with the raw amino-acid sequence, 123 residues long: Small ribosomal subunit protein uS12c (123 aa).

It belongs to the universal ribosomal protein uS12 family. In terms of assembly, part of the 30S ribosomal subunit.

It is found in the plastid. The protein resides in the chloroplast. Its function is as follows. With S4 and S5 plays an important role in translational accuracy. Located at the interface of the 30S and 50S subunits. In Chlorella vulgaris (Green alga), this protein is Small ribosomal subunit protein uS12c (rps12).